The chain runs to 242 residues: RNA polymerase sigma factor for flagellar operon (242 aa).

Positions 55-68 (DMQQIGLIALVEAG) match the Polymerase core binding motif. The segment at residues 211–230 (LHEIALVLDLTPPRICQLHK) is a DNA-binding region (H-T-H motif).

The protein belongs to the sigma-70 factor family.

Functionally, sigma factors are initiation factors that promote the attachment of RNA polymerase to specific initiation sites and are then released. This alternative sigma factor is specific for the flagellin gene (fliC) expression. This is RNA polymerase sigma factor for flagellar operon (lafS) from Vibrio parahaemolyticus serotype O3:K6 (strain RIMD 2210633).